The primary structure comprises 212 residues: Ribosomal RNA small subunit methyltransferase G (212 aa).

S-adenosyl-L-methionine contacts are provided by residues G73, F78, 96-98, 124-125, and R141; these read ESS and VE.

It belongs to the methyltransferase superfamily. RNA methyltransferase RsmG family.

It localises to the cytoplasm. In terms of biological role, specifically methylates the N7 position of a guanine in 16S rRNA. The sequence is that of Ribosomal RNA small subunit methyltransferase G from Aster yellows witches'-broom phytoplasma (strain AYWB).